A 348-amino-acid polypeptide reads, in one-letter code: Protein disulfide isomerase CRELD2 (348 aa).

The N-terminal stretch at 1–22 is a signal peptide; the sequence is MHLPPAAAVGLLLLLLPPPARV. The CXXC motif lies at 30-33; that stretch reads CQRC. 4 disulfide bridges follow: cysteine 30–cysteine 33, cysteine 139–cysteine 153, cysteine 147–cysteine 165, and cysteine 167–cysteine 176. The region spanning 135-177 is the EGF-like 1 domain; the sequence is DCQECQGGSQRPCSGNGHCDGDGSRQGDGSCQCHVGYKGPLCI. The stretch at 192 to 239 is one FU 1 repeat; sequence HSFCTACDESCKTCSGPTNKGCVECEVGWTRVEDACVDVDECAAETPP. An N-linked (GlcNAc...) asparagine glycan is attached at asparagine 250. The stretch at 252–299 is one FU 2 repeat; that stretch reads SYTCEECDSTCVGCTGKGPANCKECISGYSKQKGECADIDECSLETKV. The CXXC motif lies at 262 to 265; the sequence is CVGC. 4 disulfide bridges follow: cysteine 262-cysteine 265, cysteine 293-cysteine 307, cysteine 300-cysteine 316, and cysteine 318-cysteine 328. Positions 289–329 constitute an EGF-like 2; calcium-binding domain; it reads DIDECSLETKVCKKENENCYNTPGSFVCVCPEGFEEDRRCL.

This sequence belongs to the CRELD family. In terms of assembly, interacts with CHRNA4. Component of a complex containing at least CRELD2, MANF, MATN3 and PDIA4.

It is found in the endoplasmic reticulum. The catalysed reaction is Catalyzes the rearrangement of -S-S- bonds in proteins.. Functionally, protein disulfide isomerase. Might play a role in the unfolded protein response. May regulate transport of alpha4-beta2 neuronal acetylcholine receptor. This is Protein disulfide isomerase CRELD2 (CRELD2) from Cricetulus griseus (Chinese hamster).